The following is a 293-amino-acid chain: Glycine--tRNA ligase alpha subunit (293 aa).

This sequence belongs to the class-II aminoacyl-tRNA synthetase family. Tetramer of two alpha and two beta subunits.

The protein localises to the cytoplasm. It catalyses the reaction tRNA(Gly) + glycine + ATP = glycyl-tRNA(Gly) + AMP + diphosphate. This is Glycine--tRNA ligase alpha subunit from Wolinella succinogenes (strain ATCC 29543 / DSM 1740 / CCUG 13145 / JCM 31913 / LMG 7466 / NCTC 11488 / FDC 602W) (Vibrio succinogenes).